A 97-amino-acid polypeptide reads, in one-letter code: uncharacterized protein (97 aa).

Basic and acidic residues predominate over residues 1-24 (MTQKNGADRPDDYKRFSSLDKEYD). The disordered stretch occupies residues 1–97 (MTQKNGADRP…FEGTIDQNLD (97 aa)). The span at 31–43 (SNTETESVNTETQ) shows a compositional bias: low complexity. Residues 44-53 (THNKENKNDT) are compositionally biased toward basic and acidic residues.

This is an uncharacterized protein from Bacillus subtilis (strain 168).